A 174-amino-acid polypeptide reads, in one-letter code: Myeloid-derived growth factor (174 aa).

A signal peptide spans 1–32; the sequence is MAAPSGRRNGSGGANLWVSLLLAAAALRPVET.

Belongs to the MYDGF family.

The protein resides in the secreted. The protein localises to the endoplasmic reticulum-Golgi intermediate compartment. Its subcellular location is the endoplasmic reticulum. It localises to the golgi apparatus. In terms of biological role, bone marrow-derived monocyte and paracrine-acting protein that promotes cardiac myocyte survival and adaptive angiogenesis for cardiac protection and/or repair after myocardial infarction (MI). Stimulates endothelial cell proliferation through a MAPK1/3-, STAT3- and CCND1-mediated signaling pathway. Inhibits cardiac myocyte apoptosis in a PI3K/AKT-dependent signaling pathway. The polypeptide is Myeloid-derived growth factor (Bos taurus (Bovine)).